The primary structure comprises 451 residues: F-box/LRR-repeat protein 13 (451 aa).

The region spanning 17–70 (VDWISKLPDCLLCEVLLNLPTKDVVKTSVLSRRWRNLWKHVPGLDLDNTDFQEF) is the F-box domain. LRR repeat units lie at residues 128-155 (DDSY…KLCG), 177-202 (TKFA…TIER), 224-251 (VADS…RLSD), and 335-363 (CVEF…VVKS). One can recognise an FBD domain in the interval 370–421 (GENIILPGPRRFLSSLEYVKIERPLKGEAMEMKLVSYLLENSTILKKLTLCL).

This chain is F-box/LRR-repeat protein 13 (FBL13), found in Arabidopsis thaliana (Mouse-ear cress).